The chain runs to 592 residues: A-type ATP synthase subunit A (592 aa).

236-243 (GPFGSGKT) is an ATP binding site.

The protein belongs to the ATPase alpha/beta chains family. As to quaternary structure, has multiple subunits with at least A(3), B(3), C, D, E, F, H, I and proteolipid K(x).

Its subcellular location is the cell membrane. The catalysed reaction is ATP + H2O + 4 H(+)(in) = ADP + phosphate + 5 H(+)(out). In terms of biological role, component of the A-type ATP synthase that produces ATP from ADP in the presence of a proton gradient across the membrane. The A chain is the catalytic subunit. This Methanopyrus kandleri (strain AV19 / DSM 6324 / JCM 9639 / NBRC 100938) protein is A-type ATP synthase subunit A.